Reading from the N-terminus, the 516-residue chain is UDP-N-acetylmuramyl-tripeptide synthetase (516 aa).

Ser38 lines the UDP-N-acetyl-alpha-D-muramoyl-L-alanyl-D-glutamate pocket. Residue 116 to 122 (GTKGKTT) coordinates ATP. Residues 162–163 (TT), Ser189, and Arg197 each bind UDP-N-acetyl-alpha-D-muramoyl-L-alanyl-D-glutamate. Residue Lys231 is modified to N6-carboxylysine.

It belongs to the MurCDEF family. MurE subfamily. In terms of processing, carboxylation is probably crucial for Mg(2+) binding and, consequently, for the gamma-phosphate positioning of ATP.

Its subcellular location is the cytoplasm. It functions in the pathway cell wall biogenesis; peptidoglycan biosynthesis. In terms of biological role, catalyzes the addition of an amino acid to the nucleotide precursor UDP-N-acetylmuramoyl-L-alanyl-D-glutamate (UMAG) in the biosynthesis of bacterial cell-wall peptidoglycan. The polypeptide is UDP-N-acetylmuramyl-tripeptide synthetase (Lactobacillus delbrueckii subsp. bulgaricus (strain ATCC 11842 / DSM 20081 / BCRC 10696 / JCM 1002 / NBRC 13953 / NCIMB 11778 / NCTC 12712 / WDCM 00102 / Lb 14)).